Consider the following 233-residue polypeptide: Opacity protein opA67 (233 aa).

Residue Ala-1 is a signal peptide.

The protein belongs to the opacity porin family.

It is found in the cell outer membrane. Its function is as follows. Implicated in a number of adherence functions. OPA proteins are implicated in pathogenesis and are subject to phase variation. The polypeptide is Opacity protein opA67 (Neisseria gonorrhoeae).